The primary structure comprises 358 residues: Alanine racemase (358 aa).

K34 acts as the Proton acceptor; specific for D-alanine in catalysis. An N6-(pyridoxal phosphate)lysine modification is found at K34. A substrate-binding site is contributed by R129. Y254 functions as the Proton acceptor; specific for L-alanine in the catalytic mechanism. M302 is a binding site for substrate.

This sequence belongs to the alanine racemase family. Requires pyridoxal 5'-phosphate as cofactor.

It carries out the reaction L-alanine = D-alanine. It participates in amino-acid biosynthesis; D-alanine biosynthesis; D-alanine from L-alanine: step 1/1. Its function is as follows. Catalyzes the interconversion of L-alanine and D-alanine. May also act on other amino acids. The chain is Alanine racemase (alr) from Hamiltonella defensa subsp. Acyrthosiphon pisum (strain 5AT).